The sequence spans 198 residues: Na(+)-translocating NADH-quinone reductase subunit E (198 aa).

6 helical membrane passes run 11–31 (SVFIENMALSFFLGMCTFLAV), 35–55 (VSTSFGLGIAVIVVLGIAVPV), 77–97 (FLNFITFIGVIAALVQILEMF), 110–130 (GIFLPLITVNCAIFGGVSFMV), 140–160 (VVYGIGAGTGWMLAIVALAGL), and 176–196 (LGITFITVGLMALGFMSFSGI).

It belongs to the NqrDE/RnfAE family. As to quaternary structure, composed of six subunits; NqrA, NqrB, NqrC, NqrD, NqrE and NqrF.

The protein resides in the cell inner membrane. It catalyses the reaction a ubiquinone + n Na(+)(in) + NADH + H(+) = a ubiquinol + n Na(+)(out) + NAD(+). Functionally, NQR complex catalyzes the reduction of ubiquinone-1 to ubiquinol by two successive reactions, coupled with the transport of Na(+) ions from the cytoplasm to the periplasm. NqrA to NqrE are probably involved in the second step, the conversion of ubisemiquinone to ubiquinol. The sequence is that of Na(+)-translocating NADH-quinone reductase subunit E from Actinobacillus succinogenes (strain ATCC 55618 / DSM 22257 / CCUG 43843 / 130Z).